The following is an 841-amino-acid chain: Chitin synthase 1 (841 aa).

Residues 1-13 (MNPGQKQEHDQYP) are compositionally biased toward basic and acidic residues. A disordered region spans residues 1 to 98 (MNPGQKQEHD…YGEAPRRQPR (98 aa)). The segment covering 76–85 (PPQPMGPPSP) has biased composition (pro residues). The next 9 membrane-spanning stretches (helical) occupy residues 302 to 322 (WFFQAFGPVINPNVCVLIDVG), 385 to 405 (SVFGYISVLPGAFSAYRFTAL), 526 to 546 (LIFSWFALGNFYLTFYILTSA), 564 to 584 (ILHTILNYIYILLIIVQFILA), 602 to 622 (FFAILMVYMMFATIWITVVGV), 644 to 664 (NIIISIVSTYAMYFIASFLFF), 673 to 693 (FIQYIFLSPSYTNILNIYAFC), 778 to 798 (VISWIISNLILVVLITNENIL), and 816 to 836 (LWSVAGLSAIRFCGSGLYLIF).

The protein belongs to the chitin synthase family.

It is found in the cell membrane. It carries out the reaction [(1-&gt;4)-N-acetyl-beta-D-glucosaminyl](n) + UDP-N-acetyl-alpha-D-glucosamine = [(1-&gt;4)-N-acetyl-beta-D-glucosaminyl](n+1) + UDP + H(+). In terms of biological role, polymerizes chitin, a structural polymer of the cell wall and septum, by transferring the sugar moiety of UDP-GlcNAc to the non-reducing end of the growing chitin polymer. This is Chitin synthase 1 (chs1) from Phycomyces blakesleeanus (strain ATCC 8743b / DSM 1359 / FGSC 10004 / NBRC 33097 / NRRL 1555).